Here is a 1173-residue protein sequence, read N- to C-terminus: Pyruvate-flavodoxin oxidoreductase (1173 aa).

4Fe-4S ferredoxin-type domains lie at 681–710 (NVPV…PVLI) and 735–766 (YRLA…MQPL). C690, C693, C696, C700, C744, C747, C750, C754, C810, C813, and C838 together coordinate [4Fe-4S] cluster. The span at 922–933 (GEGTRERAEKVG) shows a compositional bias: basic and acidic residues. Residues 922 to 946 (GEGTRERAEKVGDTSGFANAREKSR) form a disordered region. C1075 lines the [4Fe-4S] cluster pocket.

The protein belongs to the pyruvate:ferredoxin/flavodoxin oxidoreductase family. Requires [4Fe-4S] cluster as cofactor.

It catalyses the reaction oxidized [flavodoxin] + pyruvate + CoA + 2 H(+) = reduced [flavodoxin] + acetyl-CoA + CO2. Functionally, oxidoreductase required for the transfer of electrons from pyruvate to flavodoxin, which reduces nitrogenase. In Enterobacter agglomerans (Erwinia herbicola), this protein is Pyruvate-flavodoxin oxidoreductase (nifJ).